Reading from the N-terminus, the 1111-residue chain is Receptor-type guanylate cyclase gcy-14 (1111 aa).

Positions 1 to 14 (MCLFLLLFPYLASG) are cleaved as a signal peptide. The Extracellular portion of the chain corresponds to 15 to 473 (QFLQTVKVGL…ECPPDFVKEY (459 aa)). Residues Asn-65, Asn-130, Asn-318, Asn-340, Asn-365, and Asn-379 are each glycosylated (N-linked (GlcNAc...) asparagine). Residues 474–494 (LVYTIIAAVIVVLALLAGCAG) traverse the membrane as a helical segment. Residues 482–817 (VIVVLALLAG…KSNLMDHVFN (336 aa)) enclose the Protein kinase domain. Residues 488-496 (LLAGCAGLL) and Lys-545 contribute to the ATP site. Over 495 to 1111 (LLYTMQMKRK…DFNNGNECVS (617 aa)) the chain is Cytoplasmic. The Guanylate cyclase domain occupies 875–1005 (TIFFSDVVQF…DAVNTASRME (131 aa)). The segment at 1061–1082 (SAQAPREKTPEPPRRQSVRSIS) is disordered. Residues 1065–1074 (PREKTPEPPR) show a composition bias toward basic and acidic residues.

This sequence belongs to the adenylyl cyclase class-4/guanylyl cyclase family. In terms of assembly, homodimer. Expressed asymmetrically in ASEL sensory neuron.

It localises to the cell membrane. Its subcellular location is the cell projection. The protein resides in the cilium. The enzyme catalyses GTP = 3',5'-cyclic GMP + diphosphate. In terms of biological role, guanylate cyclase involved in the production of the second messenger cGMP. Regulates chemotaxis responses toward Na(1+) and Li(1+) salt ions and alkaline pH in ASE left (ASEL) sensory neuron. Directly senses environmental alkalinity in ASEL neuron which probably leads to the activation of cGMP-gated cation channel tax2/tax4. The chain is Receptor-type guanylate cyclase gcy-14 from Caenorhabditis elegans.